The primary structure comprises 264 residues: Major prion protein (264 aa).

The signal sequence occupies residues 1 to 24 (MVKSHIGSWILVLFVAMWSDVGLC). The interval 25-241 (KKRPKPGGGW…ESQAYYQRGA (217 aa)) is interaction with GRB2, ERI3 and SYN1. The disordered stretch occupies residues 28–119 (PKPGGGWNTG…WNKPSKPKTN (92 aa)). 6 repeat units span residues 54–62 (PQGGGGWGQ), 63–70 (PHGGGWGQ), 71–78 (PHGGGWGQ), 79–86 (PHGGGWGQ), 87–94 (PHGGGWGQ), and 95–103 (PHGGGGWGQ). Residues 54-103 (PQGGGGWGQPHGGGWGQPHGGGWGQPHGGGWGQPHGGGWGQPHGGGGWGQ) form a 6 X 8 AA tandem repeats of P-H-G-G-G-W-G-Q region. The span at 55–105 (QGGGGWGQPHGGGWGQPHGGGWGQPHGGGWGQPHGGGWGQPHGGGGWGQGG) shows a compositional bias: gly residues. 12 residues coordinate Cu(2+): H72, G73, G74, H80, G81, G82, H88, G89, G90, H96, G98, and G99. Cysteines 190 and 225 form a disulfide. N192 and N208 each carry an N-linked (GlcNAc...) asparagine glycan. Residue A241 is the site of GPI-anchor amidated alanine attachment. Residues 242 to 264 (SVILFSSPPVILLISFLIFLIVG) constitute a propeptide, removed in mature form.

Belongs to the prion family. Monomer and homodimer. Has a tendency to aggregate into amyloid fibrils containing a cross-beta spine, formed by a steric zipper of superposed beta-strands. Soluble oligomers may represent an intermediate stage on the path to fibril formation. Copper binding may promote oligomerization. Interacts with GRB2, APP, ERI3/PRNPIP and SYN1. Mislocalized cytosolically exposed PrP interacts with MGRN1; this interaction alters MGRN1 subcellular location and causes lysosomal enlargement. Interacts with KIAA1191.

The protein resides in the cell membrane. It localises to the golgi apparatus. Functionally, its primary physiological function is unclear. Has cytoprotective activity against internal or environmental stresses. May play a role in neuronal development and synaptic plasticity. May be required for neuronal myelin sheath maintenance. May play a role in iron uptake and iron homeostasis. Soluble oligomers are toxic to cultured neuroblastoma cells and induce apoptosis (in vitro). Association with GPC1 (via its heparan sulfate chains) targets PRNP to lipid rafts. Also provides Cu(2+) or Zn(2+) for the ascorbate-mediated GPC1 deaminase degradation of its heparan sulfate side chains. The protein is Major prion protein (PRNP) of Antilope cervicapra (Blackbuck).